The sequence spans 355 residues: Guanine nucleotide-binding protein subunit beta-5a (355 aa).

The disordered stretch occupies residues Met1–Thr23. WD repeat units lie at residues Gly63–Ala102, Met105–Leu144, Met153–His194, Gly195–Glu238, Ser239–Ile278, Ser280–Ile322, and Gly325–Ala355.

Belongs to the WD repeat G protein beta family. In terms of assembly, may interact with RGS9; this interaction stabilizes both proteins and increases RGS9 GTPase-activating protein (GAP) activity, hence accelerating the deactivation of D(2) dopamine receptor-mediated signaling.

It is found in the membrane. Functionally, enhances GTPase-activating protein (GAP) activity of regulator of G protein signaling (RGS) proteins, such as RGS7 and RGS9, hence involved in the termination of the signaling initiated by the G protein coupled receptors (GPCRs) by accelerating the GTP hydrolysis on the G-alpha subunits, thereby promoting their inactivation. Increases RGS7 GTPase-activating protein (GAP) activity, thereby regulating mood and cognition. Increases RGS9 GTPase-activating protein (GAP) activity, hence contributes to the deactivation of G protein signaling initiated by D(2) dopamine receptors. Along with gnb5b, plays an important role in neuronal signaling, including in the parasympathetic, but not sympathetic, control of heart rate. This chain is Guanine nucleotide-binding protein subunit beta-5a, found in Danio rerio (Zebrafish).